The following is a 170-amino-acid chain: Adenine phosphoribosyltransferase (170 aa).

The protein belongs to the purine/pyrimidine phosphoribosyltransferase family. In terms of assembly, homodimer.

The protein resides in the cytoplasm. The catalysed reaction is AMP + diphosphate = 5-phospho-alpha-D-ribose 1-diphosphate + adenine. Its pathway is purine metabolism; AMP biosynthesis via salvage pathway; AMP from adenine: step 1/1. Functionally, catalyzes a salvage reaction resulting in the formation of AMP, that is energically less costly than de novo synthesis. The polypeptide is Adenine phosphoribosyltransferase (Carboxydothermus hydrogenoformans (strain ATCC BAA-161 / DSM 6008 / Z-2901)).